Here is a 165-residue protein sequence, read N- to C-terminus: Putative pre-16S rRNA nuclease (165 aa).

It belongs to the YqgF nuclease family.

It localises to the cytoplasm. In terms of biological role, could be a nuclease involved in processing of the 5'-end of pre-16S rRNA. In Rhizobium meliloti (strain 1021) (Ensifer meliloti), this protein is Putative pre-16S rRNA nuclease.